The following is a 224-amino-acid chain: 7-cyano-7-deazaguanine synthase (224 aa).

8 to 18 (LSGGMDSAAVI) serves as a coordination point for ATP. C186, C196, C199, and C202 together coordinate Zn(2+).

This sequence belongs to the QueC family. Requires Zn(2+) as cofactor.

The enzyme catalyses 7-carboxy-7-deazaguanine + NH4(+) + ATP = 7-cyano-7-deazaguanine + ADP + phosphate + H2O + H(+). The protein operates within purine metabolism; 7-cyano-7-deazaguanine biosynthesis. Functionally, catalyzes the ATP-dependent conversion of 7-carboxy-7-deazaguanine (CDG) to 7-cyano-7-deazaguanine (preQ(0)). The chain is 7-cyano-7-deazaguanine synthase from Xanthomonas campestris pv. campestris (strain 8004).